Here is a 203-residue protein sequence, read N- to C-terminus: Endo-type membrane-bound lytic murein transglycosylase A (203 aa).

The N-terminal stretch at 1–15 (MKLRWFAFLIVLLAG) is a signal peptide. C16 carries N-palmitoyl cysteine lipidation. The S-diacylglycerol cysteine moiety is linked to residue C16.

The protein belongs to the transglycosylase Slt family.

The protein resides in the cell outer membrane. The enzyme catalyses Endolytic cleavage of the (1-&gt;4)-beta-glycosidic linkage between N-acetylmuramic acid (MurNAc) and N-acetylglucosamine (GlcNAc) residues in peptidoglycan with concomitant formation of a 1,6-anhydrobond in the MurNAc residue.. Its function is as follows. Murein-degrading enzyme. May play a role in recycling of muropeptides during cell elongation and/or cell division. Preferentially cleaves at a distance of more than two disaccharide units from the ends of the glycan chain. The chain is Endo-type membrane-bound lytic murein transglycosylase A from Shigella dysenteriae serotype 1 (strain Sd197).